Consider the following 145-residue polypeptide: Arginine repressor (145 aa).

Belongs to the ArgR family.

The protein resides in the cytoplasm. It participates in amino-acid biosynthesis; L-arginine biosynthesis [regulation]. Regulates arginine biosynthesis genes. In Streptococcus mutans serotype c (strain ATCC 700610 / UA159), this protein is Arginine repressor.